The following is a 66-amino-acid chain: ATP synthase F(0) complex subunit 8 (66 aa).

Residues Thr8–Phe24 traverse the membrane as a helical segment. N6-acetyllysine; alternate is present on Lys54. Position 54 is an N6-succinyllysine; alternate (Lys54). At Lys57 the chain carries N6-acetyllysine.

The protein belongs to the ATPase protein 8 family. As to quaternary structure, component of the ATP synthase complex composed at least of ATP5F1A/subunit alpha, ATP5F1B/subunit beta, ATP5MC1/subunit c (homooctomer), MT-ATP6/subunit a, MT-ATP8/subunit 8, ATP5ME/subunit e, ATP5MF/subunit f, ATP5MG/subunit g, ATP5MK/subunit k, ATP5MJ/subunit j, ATP5F1C/subunit gamma, ATP5F1D/subunit delta, ATP5F1E/subunit epsilon, ATP5PF/subunit F6, ATP5PB/subunit b, ATP5PD/subunit d, ATP5PO/subunit OSCP. ATP synthase complex consists of a soluble F(1) head domain (subunits alpha(3) and beta(3)) - the catalytic core - and a membrane F(0) domain - the membrane proton channel (subunits c, a, 8, e, f, g, k and j). These two domains are linked by a central stalk (subunits gamma, delta, and epsilon) rotating inside the F1 region and a stationary peripheral stalk (subunits F6, b, d, and OSCP). Interacts with PRICKLE3.

It is found in the mitochondrion membrane. Subunit 8, of the mitochondrial membrane ATP synthase complex (F(1)F(0) ATP synthase or Complex V) that produces ATP from ADP in the presence of a proton gradient across the membrane which is generated by electron transport complexes of the respiratory chain. ATP synthase complex consist of a soluble F(1) head domain - the catalytic core - and a membrane F(1) domain - the membrane proton channel. These two domains are linked by a central stalk rotating inside the F(1) region and a stationary peripheral stalk. During catalysis, ATP synthesis in the catalytic domain of F(1) is coupled via a rotary mechanism of the central stalk subunits to proton translocation. In vivo, can only synthesize ATP although its ATP hydrolase activity can be activated artificially in vitro. Part of the complex F(0) domain. The chain is ATP synthase F(0) complex subunit 8 from Bos mutus grunniens (Wild yak).